The following is a 199-amino-acid chain: MAMWVFGYGSLIWKTGFPFDESLPGFIKGYRRVFHQGSTDHRGTPDFPGRTVTLEAAHEEVCCGVAYKITKEEDKRDALLHLEVREKQYDQKEYLDFFTDSNASEPAVAGVMVYIASPDKKSNNNYLGPAPLEDIAKQIVKAKGPSGPNRDYLFNLEEALAQLGFKDKHVTDLANQVRHILSESEELDIDATAATANNV.

5–10 (VFGYGS) is a substrate binding site. Residue Glu86 is the Proton acceptor of the active site.

This sequence belongs to the gamma-glutamylcyclotransferase family. Mn(2+) serves as cofactor.

The protein localises to the cytoplasm. It carries out the reaction glutathione = L-cysteinylglycine + 5-oxo-L-proline. In terms of biological role, converts GSH to 5-oxoproline and cysteine-glycine (Cys-Gly) dipeptide in vitro and plays a significant role in glutathione (GSH) homeostasis. Has no activity towards gamma-glutamyl-L-cysteine but possesses very low activity towards gamma-glutamyl-L-alanine. This chain is Gamma-glutamylcyclotransferase 2-3, found in Arabidopsis thaliana (Mouse-ear cress).